The chain runs to 583 residues: Atlastin-2 (583 aa).

A disordered region spans residues 1 to 44 (MAEGDEAARGQQPHQGLWRRRRTSDPSAAVNHVSSTTSLGENYE). The interval 1 to 60 (MAEGDEAARGQQPHQGLWRRRRTSDPSAAVNHVSSTTSLGENYEDDDLVNSDEVMKKPCP) is N-terminal hypervariable region (HVR). Over 1 to 476 (MAEGDEAARG…NIFYAARTPA (476 aa)) the chain is Cytoplasmic. Serine 24 bears the Phosphoserine mark. One can recognise a GB1/RHD3-type G domain in the interval 91–336 (DLNIVVVSVA…LVPLLLAPEN (246 aa)). GDP is bound by residues arginine 104, lysine 105, glycine 106, lysine 107, serine 108, phenylalanine 109, glutamine 175, arginine 244, and aspartate 245. Residues arginine 104, lysine 105, glycine 106, lysine 107, serine 108, and phenylalanine 109 each contribute to the GTP site. Serine 108 lines the Mg(2+) pocket. The GTP site is built by arginine 244 and aspartate 245. A coiled-coil region spans residues 256–284 (LEGGKQFLEKRLQVKQNQHEELQNVRKHI). Lysine 270 carries the post-translational modification N6-methyllysine. Valine 303 and asparagine 306 together coordinate GDP. Valine 303 provides a ligand contact to GTP. Positions 374–465 (MLQATAEANN…YANFIKHNDG (92 aa)) are 3HB (three-helix bundle) domain. The segment at 466–474 (KNIFYAART) is linker. Residues 477 to 497 (TLFAVMFAMYIISGLTGFIGL) form a helical membrane-spanning segment. Over 498-499 (NS) the chain is Lumenal. Residues 500–520 (IAVLCNLVMGLALIFLCTWAY) traverse the membrane as a helical segment. Over 521-583 (VKYSGEFREI…VSHHARLKTD (63 aa)) the chain is Cytoplasmic. Residues 547-583 (KPLGDNLMEENIRQSVTNSIKAGLTDQVSHHARLKTD) form an autoinhibitory domain region.

This sequence belongs to the TRAFAC class dynamin-like GTPase superfamily. GB1/RHD3 GTPase family. GB1 subfamily. Monomeric and homodimeric. The homodimer, transiently formed by two molecules on opposing membranes, is the active form mediating ER membrane fusion. Interacts with REEP5 and RTN3; these proteins are involved in endoplasmic reticulum tubular network organization. Interacts with ZFYVE27; both proteins are involved in endoplasmic reticulum tubular network organization. As to expression, expressed in peripheral tissues (at protein level).

It is found in the endoplasmic reticulum membrane. The catalysed reaction is GTP + H2O = GDP + phosphate + H(+). With respect to regulation, with its alternative C-terminus disrupting the autoinhibitory domain, this brain-specific isoform is probably more active at fusing ER membranes. Its function is as follows. Atlastin-2 (ATL2) is a membrane-anchored GTPase that mediates the GTP-dependent fusion of endoplasmic reticulum (ER) membranes, maintaining the continuous ER network. It facilitates the formation of three-way junctions where ER tubules intersect. Two atlastin-2 on neighboring ER tubules bind GTP and form loose homodimers through the GB1/RHD3-type G domains and 3HB regions. Upon GTP hydrolysis, the 3HB regions tighten, pulling the membranes together to drive their fusion. After fusion, the homodimer disassembles upon release of inorganic phosphate (Pi). Subsequently, GDP dissociates, resetting the monomers to a conformation ready for a new fusion cycle. The protein is Atlastin-2 of Homo sapiens (Human).